The following is a 533-amino-acid chain: WUSCHEL-related homeobox 7 (533 aa).

Disordered stretches follow at residues 1–74 (MASS…NPRP) and 125–212 (SKNK…STQA). Residues 28–41 (AGSPPSLLSGSSAG) are compositionally biased toward low complexity. Basic and acidic residues predominate over residues 59–68 (GEERVPDPKP). Positions 65–129 (DPKPRWNPRP…NRKSRSKNKL (65 aa)) form a DNA-binding region, homeobox; WUS-type. A compositionally biased stretch (gly residues) spans 132-143 (GGTGRAGLGLGG). Residues 161-174 (FTPPPPILPAPQPV) show a composition bias toward pro residues. The segment covering 175 to 202 (QPQQQLVSPVAAPTSSSSSSSDRSSGSS) has biased composition (low complexity).

It belongs to the WUS homeobox family.

It is found in the nucleus. Its function is as follows. Transcription factor which may be involved in developmental processes. This Oryza sativa subsp. japonica (Rice) protein is WUSCHEL-related homeobox 7 (WOX7).